A 540-amino-acid polypeptide reads, in one-letter code: H(+)/hexose cotransporter 2 (540 aa).

At 1-29 (MAGGGPVASTTTNRASQYGYARGGLNWYI) the chain is on the cytoplasmic side. The helical transmembrane segment at 30–50 (FIVALTAGSGGLLFGYDIGVT) threads the bilayer. Residues 51–90 (GGVTSMPEFLQKFFPSIYDRTQQPSDSKDPYCTYDDQKLQ) lie on the Extracellular side of the membrane. The helical transmembrane segment at 91–111 (LFTSSFFLAGMFVSFFAGSVV) threads the bilayer. The Cytoplasmic portion of the chain corresponds to 112-124 (RRWGRKPTMLIAS). A helical membrane pass occupies residues 125-135 (VLFLAGAGLNA). The Extracellular segment spans residues 136–147 (GAQDLAMLVIGR). Residues 148–168 (VLLGFGVGGGNNAVPLYLSEC) form a helical membrane-spanning segment. The Cytoplasmic segment spans residues 169–176 (APPKYRGG). A helical membrane pass occupies residues 177 to 197 (LNMMFQLAVTIGIIVAQLVNY). Residues 198-207 (GTQTMNNGWR) lie on the Extracellular side of the membrane. A helical transmembrane segment spans residues 208–228 (LSLGLAGVPAIILLIGSLLLP). The Cytoplasmic portion of the chain corresponds to 229–296 (ETPNSLIERG…YSPMLIVTSL (68 aa)). A helical transmembrane segment spans residues 297-317 (IAMLQQLTGINAIMFYVPVLF). The Extracellular portion of the chain corresponds to 318 to 326 (SSFGTARHA). A helical transmembrane segment spans residues 327-337 (ALLNTVIIGAV). Topologically, residues 338–355 (NVAATFVSIFSVDKFGRR) are cytoplasmic. The chain crosses the membrane as a helical span at residues 356-376 (GLFLEGGIQMFIGQVVTAAVL). At 377 to 396 (GVELNKYGTNLPSSTAAGVL) the chain is on the extracellular side. The chain crosses the membrane as a helical span at residues 397–417 (VVICVYVAAFAWSWGPLGWLV). At 418-435 (PSEIQTLETRGAGMSMAV) the chain is on the cytoplasmic side. Residues 436–456 (IVNFLFSFVIGQAFLSMMCAM) traverse the membrane as a helical segment. The Extracellular segment spans residues 457 to 458 (RW). A helical membrane pass occupies residues 459 to 479 (GVFLFFAGWVVIMTFFVYFCL). Topologically, residues 480-540 (PETKGVPVET…SEDGKPASDQ (61 aa)) are cytoplasmic.

The protein belongs to the major facilitator superfamily. Sugar transporter (TC 2.A.1.1) family.

Its subcellular location is the membrane. Its function is as follows. Active uptake of galactose. This Parachlorella kessleri (Green alga) protein is H(+)/hexose cotransporter 2 (HUP2).